Here is a 380-residue protein sequence, read N- to C-terminus: MTAFPAAPDLAPPSRAAQGERVLCAMSGGVDSSVTASLLKEQGYQVIGAMMRFWPDDKRTDTFDSCCSPDAAYEARRVAEQVGVPFYLLDYREPFQRHIVGPFLEEYARGRTPNPCVNCNTKVKFDELVKKAKMLGCRYVATGHYVKRVDNAQGEVEFHRGDDPRKDQTYFLWGTPRDALPYILFPVGELEKPQVREIAAERGLLTAQKPESQNICFVPGKVQDFVAEHLPQAQGYIREIATGEVVGEHLGTQFYTLGQKKGLGLYQSHRVRHVVHLDPDSNTVWVGDYDDCLWTGLKATDANYLLDLAELPTELEVQVRYRTAPVKAHVLHADAEGFELEFAEPQFAVAPGQSAVLYAGSRLLGGGLIADHARELPALT.

ATP-binding positions include 25–32 (AMSGGVDS) and Met51. The Nucleophile role is filled by Cys119. A disulfide bridge links Cys119 with Cys216. Gly143 is an ATP binding site. Residues 166-168 (KDQ) form an interaction with tRNA region. The active-site Cysteine persulfide intermediate is the Cys216. Residues 320-321 (RY) form an interaction with tRNA region.

The protein belongs to the MnmA/TRMU family.

It is found in the cytoplasm. It carries out the reaction S-sulfanyl-L-cysteinyl-[protein] + uridine(34) in tRNA + AH2 + ATP = 2-thiouridine(34) in tRNA + L-cysteinyl-[protein] + A + AMP + diphosphate + H(+). Catalyzes the 2-thiolation of uridine at the wobble position (U34) of tRNA, leading to the formation of s(2)U34. The chain is tRNA-specific 2-thiouridylase MnmA from Deinococcus radiodurans (strain ATCC 13939 / DSM 20539 / JCM 16871 / CCUG 27074 / LMG 4051 / NBRC 15346 / NCIMB 9279 / VKM B-1422 / R1).